The chain runs to 186 residues: MSEPASISAGIADRYATAIFEIAAESNALDNLETSINDLAASLADSEDLRTLITSPLVSREEQAAAISAVADKMGLVDVLRNSLALMAAKRRLFVVPALIDALRARIAEARGEVTAEVVSAKALTKTQSEKLAKTLAERVGKKVTINATVDASIIGGLVVKVGSKMIDSSIRSKLNSLQNAMKEVG.

Belongs to the ATPase delta chain family. In terms of assembly, F-type ATPases have 2 components, F(1) - the catalytic core - and F(0) - the membrane proton channel. F(1) has five subunits: alpha(3), beta(3), gamma(1), delta(1), epsilon(1). F(0) has three main subunits: a(1), b(2) and c(10-14). The alpha and beta chains form an alternating ring which encloses part of the gamma chain. F(1) is attached to F(0) by a central stalk formed by the gamma and epsilon chains, while a peripheral stalk is formed by the delta and b chains.

The protein resides in the cell inner membrane. Its function is as follows. F(1)F(0) ATP synthase produces ATP from ADP in the presence of a proton or sodium gradient. F-type ATPases consist of two structural domains, F(1) containing the extramembraneous catalytic core and F(0) containing the membrane proton channel, linked together by a central stalk and a peripheral stalk. During catalysis, ATP synthesis in the catalytic domain of F(1) is coupled via a rotary mechanism of the central stalk subunits to proton translocation. In terms of biological role, this protein is part of the stalk that links CF(0) to CF(1). It either transmits conformational changes from CF(0) to CF(1) or is implicated in proton conduction. The protein is ATP synthase subunit delta of Ruegeria sp. (strain TM1040) (Silicibacter sp.).